Consider the following 144-residue polypeptide: UPF0299 membrane protein MS1271 (144 aa).

Transmembrane regions (helical) follow at residues 5–25 (IFLF…GEGI), 28–48 (LIPI…IGLT), 57–77 (VFFG…PVSV), and 92–112 (SLLI…GFLG).

The protein belongs to the UPF0299 family.

It localises to the cell inner membrane. The polypeptide is UPF0299 membrane protein MS1271 (Mannheimia succiniciproducens (strain KCTC 0769BP / MBEL55E)).